We begin with the raw amino-acid sequence, 143 residues long: Type II secretion system core protein G (143 aa).

The propeptide at 1–8 (MQKRRQSG) is leader sequence. Phenylalanine 9 is modified (N-methylphenylalanine). The chain crosses the membrane as a helical span at residues 9 to 29 (FTLLEVMVVIVILGILASLVV). The tract at residues 70–92 (QGLDALVNKPTAAPEPRSYRDGG) is disordered.

It belongs to the GSP G family. As to quaternary structure, type II secretion system is composed of four main components: the outer membrane complex, the inner membrane complex, the cytoplasmic secretion ATPase and the periplasm-spanning pseudopilus. Forms homomultimers. Post-translationally, cleaved by the prepilin peptidase. Methylated by prepilin peptidase at the amino group of the N-terminal phenylalanine once the leader sequence is cleaved.

The protein localises to the cell inner membrane. In terms of biological role, core component of the type II secretion system required for the energy-dependent secretion of extracellular factors such as proteases and toxins from the periplasm. Pseudopilin (pilin-like) protein that polymerizes to form the pseudopilus. Further polymerization triggers pseudopilus growth. The polypeptide is Type II secretion system core protein G (exeG) (Aeromonas hydrophila).